The sequence spans 317 residues: Low affinity immunoglobulin gamma Fc region receptor II-a (317 aa).

The N-terminal stretch at 1-33 (MTMETQMSQNVCPRNLWLLQPLTVLLLLASADS) is a signal peptide. Topologically, residues 34-217 (QAAAPPKAVL…PSMGSSSPMG (184 aa)) are extracellular. Ig-like C2-type domains follow at residues 39 to 118 (PKAV…VHLT) and 122 to 204 (EWLV…VTIT). Cystine bridges form between Cys62–Cys104 and Cys143–Cys187. Asn97 and Asn178 each carry an N-linked (GlcNAc...) asparagine glycan. The helical transmembrane segment at 218–240 (IIVAVVIATAVAAIVAAVVALIY) threads the bilayer. At 241 to 317 (CRKKRISANS…PPNDHVNSNN (77 aa)) the chain is on the cytoplasmic side. A phosphotyrosine; by SRC-type Tyr-kinases mark is found at Tyr288 and Tyr304. The tract at residues 292-317 (NPRAPTDDDKNIYLTLPPNDHVNSNN) is disordered.

Interacts with IGHG1. Interacts with INPP5D/SHIP1 and INPPL1/SHIP2, regulating its function. Interacts with APCS and FGR. Interacts with HCK. Phosphorylated by SRC-type Tyr-kinases such as LYN, BLK, FYN, HCK and SYK. In terms of tissue distribution, found on monocytes, neutrophils and eosinophil platelets.

The protein resides in the cell membrane. Binds to the Fc region of immunoglobulins gamma. Low affinity receptor. By binding to IgG it initiates cellular responses against pathogens and soluble antigens. Promotes phagocytosis of opsonized antigens. The polypeptide is Low affinity immunoglobulin gamma Fc region receptor II-a (FCGR2A) (Homo sapiens (Human)).